Consider the following 405-residue polypeptide: Serpin I2 (405 aa).

The signal sequence occupies residues 1 to 18 (MNKTILWSFLLFFSGSQT). A glycan (N-linked (GlcNAc...) asparagine) is linked at Asn-306.

Belongs to the serpin family. As to expression, expressed in pancreas.

The protein localises to the secreted. This Mus musculus (Mouse) protein is Serpin I2 (Serpini2).